A 486-amino-acid chain; its full sequence is Maternal protein exuperantia (486 aa).

2 disordered regions span residues 202 to 233 (NARV…RDEF) and 386 to 477 (STIR…ISLP). A compositionally biased stretch (basic and acidic residues) spans 218–233 (ADKHVKNGLQKERDEF). Basic residues predominate over residues 387–397 (TIRRRNKRNTP). 2 stretches are compositionally biased toward polar residues: residues 420–437 (KSQS…TPSP) and 464–476 (SALN…SISL).

Functionally, ensures the proper localization of the mRNA of the bicoid gene to the anterior regions of the oocyte thus playing a fundamental role in the establishment of the polarity of the oocyte. May bind the bcd mRNA. This is Maternal protein exuperantia (exu) from Drosophila virilis (Fruit fly).